A 255-amino-acid polypeptide reads, in one-letter code: uncharacterized protein (255 aa).

An N-terminal signal peptide occupies residues 1 to 23 (MKRLNKLVLGIIFLFLVISITAG). A lipid anchor (N-palmitoyl cysteine) is attached at Cys24. The S-diacylglycerol cysteine moiety is linked to residue Cys24.

The protein belongs to the staphylococcal tandem lipoprotein family.

The protein localises to the cell membrane. This is an uncharacterized protein from Staphylococcus aureus (strain USA300).